Consider the following 928-residue polypeptide: Interphotoreceptor matrix proteoglycan 1 (928 aa).

A signal peptide spans Met1–Gly20. Residues Ser26–Lys50 are disordered. Residues Asn29–Thr49 show a composition bias toward basic and acidic residues. An N-linked (GlcNAc...) asparagine glycan is attached at Asn143. Basic and acidic residues predominate over residues Gln164 to Asp182. The tract at residues Gln164–Pro191 is disordered. N-linked (GlcNAc...) asparagine glycans are attached at residues Asn203 and Asn212. The region spanning Ala231–Gln356 is the SEA 1 domain. Disordered regions lie at residues Leu441–Ile481 and Ala494–Ile522. The segment covering Pro466–Asp477 has biased composition (basic and acidic residues). The 114-residue stretch at Lys735–Gln848 folds into the SEA 2 domain. N-linked (GlcNAc...) asparagine glycans are attached at residues Asn756 and Asn780. The Heparin- and hyaluronan-binding signature appears at Lys785 to Arg793. N-linked (GlcNAc...) asparagine glycosylation is found at Asn794 and Asn812.

Highly glycosylated (N- and O-linked carbohydrates and sialic acid). Abundantly expressed in the retina (at protein level). Localizes to the photoreceptor layer of the interphotoreceptor matrix of the retina (at protein level).

Its subcellular location is the cell projection. The protein localises to the cilium. It localises to the photoreceptor outer segment. It is found in the secreted. The protein resides in the extracellular space. Its subcellular location is the extracellular matrix. The protein localises to the interphotoreceptor matrix. It localises to the photoreceptor inner segment. Its function is as follows. Chondroitin sulfate-, heparin- and hyaluronan-binding protein. May serve to form a basic macromolecular scaffold comprising the insoluble interphotoreceptor matrix. The polypeptide is Interphotoreceptor matrix proteoglycan 1 (Gallus gallus (Chicken)).